Here is a 350-residue protein sequence, read N- to C-terminus: Protein-glutamate methylesterase/protein-glutamine glutaminase (350 aa).

Residues 5 to 122 enclose the Response regulatory domain; sequence RVLSVDDSAL…REGMLAYSEM (118 aa). D56 carries the post-translational modification 4-aspartylphosphate. Positions 152–338 constitute a CheB-type methylesterase domain; sequence LLSSEKLLVI…DLSQVVSQQM (187 aa). Residues S164, H190, and D286 contribute to the active site.

It belongs to the CheB family. Post-translationally, phosphorylated by CheA. Phosphorylation of the N-terminal regulatory domain activates the methylesterase activity.

Its subcellular location is the cytoplasm. It carries out the reaction [protein]-L-glutamate 5-O-methyl ester + H2O = L-glutamyl-[protein] + methanol + H(+). The enzyme catalyses L-glutaminyl-[protein] + H2O = L-glutamyl-[protein] + NH4(+). Involved in chemotaxis. Part of a chemotaxis signal transduction system that modulates chemotaxis in response to various stimuli. Catalyzes the demethylation of specific methylglutamate residues introduced into the chemoreceptors (methyl-accepting chemotaxis proteins or MCP) by CheR. Also mediates the irreversible deamidation of specific glutamine residues to glutamic acid. The protein is Protein-glutamate methylesterase/protein-glutamine glutaminase of Enterobacter cloacae.